We begin with the raw amino-acid sequence, 289 residues long: Ribosomal protein L11 methyltransferase (289 aa).

S-adenosyl-L-methionine-binding residues include Thr-135, Gly-156, Asp-179, and Asn-225.

This sequence belongs to the methyltransferase superfamily. PrmA family.

The protein resides in the cytoplasm. The catalysed reaction is L-lysyl-[protein] + 3 S-adenosyl-L-methionine = N(6),N(6),N(6)-trimethyl-L-lysyl-[protein] + 3 S-adenosyl-L-homocysteine + 3 H(+). Its function is as follows. Methylates ribosomal protein L11. In Chlorobaculum tepidum (strain ATCC 49652 / DSM 12025 / NBRC 103806 / TLS) (Chlorobium tepidum), this protein is Ribosomal protein L11 methyltransferase.